The primary structure comprises 464 residues: Probable 3-ketoacyl-CoA synthase 21 (464 aa).

The helical transmembrane segment at 21-41 threads the bilayer; sequence LLSSGVSVFEIFAGLLVVHLI. The 292-residue stretch at 42–333 folds into the FAE domain; sequence YQRIRTRVKV…VIQHILCKKL (292 aa). Residues Cys-187, His-352, His-356, His-385, and Asn-389 contribute to the active site.

Belongs to the thiolase-like superfamily. Chalcone/stilbene synthases family. As to expression, expressed in flowers.

The protein localises to the membrane. It carries out the reaction a very-long-chain acyl-CoA + malonyl-CoA + H(+) = a very-long-chain 3-oxoacyl-CoA + CO2 + CoA. It participates in lipid metabolism; fatty acid biosynthesis. The polypeptide is Probable 3-ketoacyl-CoA synthase 21 (Arabidopsis thaliana (Mouse-ear cress)).